A 44-amino-acid polypeptide reads, in one-letter code: Cytochrome b559 subunit beta (44 aa).

The helical transmembrane segment at 19–35 (WLAVHTLAVPTVFFIGA) threads the bilayer. His-23 provides a ligand contact to heme.

The protein belongs to the PsbE/PsbF family. In terms of assembly, heterodimer of an alpha subunit and a beta subunit. PSII is composed of 1 copy each of membrane proteins PsbA, PsbB, PsbC, PsbD, PsbE, PsbF, PsbH, PsbI, PsbJ, PsbK, PsbL, PsbM, PsbT, PsbX, PsbY, PsbZ, Psb30/Ycf12, peripheral proteins PsbO, CyanoQ (PsbQ), PsbU, PsbV and a large number of cofactors. It forms dimeric complexes. It depends on heme b as a cofactor.

It localises to the cellular thylakoid membrane. In terms of biological role, this b-type cytochrome is tightly associated with the reaction center of photosystem II (PSII). PSII is a light-driven water:plastoquinone oxidoreductase that uses light energy to abstract electrons from H(2)O, generating O(2) and a proton gradient subsequently used for ATP formation. It consists of a core antenna complex that captures photons, and an electron transfer chain that converts photonic excitation into a charge separation. The polypeptide is Cytochrome b559 subunit beta (Gloeothece citriformis (strain PCC 7424) (Cyanothece sp. (strain PCC 7424))).